The chain runs to 116 residues: MRHGCRVPELGRPADQRKALLRALTTQLIRHGQVKTTKARAKAVRSEVDRMITLAKDGSLAARRRALGYMYDKDLVHALFAQAKDRYGDRQGGYSRVVRTVRRRGDNAEMAIIELV.

The protein belongs to the bacterial ribosomal protein bL17 family. As to quaternary structure, part of the 50S ribosomal subunit. Contacts protein L32.

The sequence is that of Large ribosomal subunit protein bL17 from Picosynechococcus sp. (strain ATCC 27264 / PCC 7002 / PR-6) (Agmenellum quadruplicatum).